Here is a 341-residue protein sequence, read N- to C-terminus: N-acetyl-gamma-glutamyl-phosphate reductase (341 aa).

C147 is an active-site residue.

Belongs to the NAGSA dehydrogenase family. Type 1 subfamily.

Its subcellular location is the cytoplasm. It catalyses the reaction N-acetyl-L-glutamate 5-semialdehyde + phosphate + NADP(+) = N-acetyl-L-glutamyl 5-phosphate + NADPH + H(+). The protein operates within amino-acid biosynthesis; L-arginine biosynthesis; N(2)-acetyl-L-ornithine from L-glutamate: step 3/4. In terms of biological role, catalyzes the NADPH-dependent reduction of N-acetyl-5-glutamyl phosphate to yield N-acetyl-L-glutamate 5-semialdehyde. The polypeptide is N-acetyl-gamma-glutamyl-phosphate reductase (Dehalococcoides mccartyi (strain CBDB1)).